Reading from the N-terminus, the 290-residue chain is uncharacterized protein (290 aa).

Disordered regions lie at residues 1–98 (MLGQ…SRRV) and 209–236 (LSGQ…AATT). Basic and acidic residues predominate over residues 63–76 (KPDRVRPGQRDRIG). Low complexity predominate over residues 87–97 (AGQARAASSRR). Residues 261–281 (CILTALLAVSFHSIGVVIMTS) traverse the membrane as a helical segment.

It localises to the membrane. This is an uncharacterized protein from Homo sapiens (Human).